Here is a 304-residue protein sequence, read N- to C-terminus: Tegument protein VP22 (304 aa).

Disordered stretches follow at residues 23–68 (YSTV…PNDD) and 112–184 (STSN…GTPK). Residues 43 to 58 (RENDLYDKQSVSKEND) are compositionally biased toward basic and acidic residues. Positions 123-142 (AQPPPRGAAAAPPPRVPTRP) are enriched in pro residues. The span at 143–154 (PTRAAATSTTPR) shows a compositional bias: low complexity. Residues 160-163 (PKQR) carry the Nuclear localization signal motif. Residues 233-245 (LDRFLKAAAIRIL) carry the Nuclear export signal motif. A disordered region spans residues 262-304 (STPDGYAAAGPNGYDRRPRTASRRRSLKCKPPADDFFDDTNSG). The span at 280 to 289 (RTASRRRSLK) shows a compositional bias: basic residues.

The protein belongs to the alphaherpesvirinae VP22 tegument protein family. As to quaternary structure, interacts with gE (via C-terminus); this interaction is necessary for the recruitment of VP22 to the Golgi and its packaging into virions. Interacts with gM (via C-terminus). Interacts with VP16; this interaction allows the formation of a tripartite complex composed of VP16, VP22 and UL41/VHS. Interacts with the capsid-binding protein UL16. Interacts with host CGAS. In terms of processing, highly phosphorylated in the host cell. Packaging is selective for underphosphorylated forms.

It is found in the virion tegument. The protein resides in the host cytoplasm. It localises to the host nucleus. The protein localises to the host Golgi apparatus. Its function is as follows. Tegument protein that plays different roles during the time course of infection. Participates in both the accumulation of viral mRNAs and viral protein translation at late time of infection. Modulates the RNase activity of the virion host shutoff protein UL41 probably to ensure necessary levels of key cellular mRNAs and proteins. Plays a role in microtubule reorganization that occurs after viral infection by stabilizing microtubule network. Plays a role in the inhibition of host innate immune system by targeting the CGAS enzymatic activity which is the principal cytosolic DNA sensor that detects invading viral DNA. Acts by mediating disruption of liquid-like droplets in which CGAS is activated, thereby preventing CGAS activity. The chain is Tegument protein VP22 from Equine herpesvirus 1 (strain Ab4p) (EHV-1).